The chain runs to 333 residues: tRNA N6-adenosine threonylcarbamoyltransferase (333 aa).

Residues His-111 and His-115 each coordinate Fe cation. Substrate contacts are provided by residues 134–138 (LVSGG), Asp-167, Gly-180, and Asn-272. Asp-300 is a Fe cation binding site.

Belongs to the KAE1 / TsaD family. The cofactor is Fe(2+).

The protein resides in the cytoplasm. The enzyme catalyses L-threonylcarbamoyladenylate + adenosine(37) in tRNA = N(6)-L-threonylcarbamoyladenosine(37) in tRNA + AMP + H(+). Its function is as follows. Required for the formation of a threonylcarbamoyl group on adenosine at position 37 (t(6)A37) in tRNAs that read codons beginning with adenine. Is involved in the transfer of the threonylcarbamoyl moiety of threonylcarbamoyl-AMP (TC-AMP) to the N6 group of A37, together with TsaE and TsaB. TsaD likely plays a direct catalytic role in this reaction. The sequence is that of tRNA N6-adenosine threonylcarbamoyltransferase from Legionella pneumophila (strain Corby).